The primary structure comprises 484 residues: Chromosomal replication initiator protein DnaA (484 aa).

Residues 1–73 (MQEGKNIWSL…EILTEKGHNT (73 aa)) form a domain I, interacts with DnaA modulators region. Residues 73–140 (TINVEFINPP…EDIHTKYRNP (68 aa)) form a domain II region. The interval 141-357 (FLKKKYTFEN…AAVTKLKAHI (217 aa)) is domain III, AAA+ region. ATP contacts are provided by glycine 185, glycine 187, lysine 188, and threonine 189. The tract at residues 358-484 (DLEDIEIDTS…IELMNKINKN (127 aa)) is domain IV, binds dsDNA.

This sequence belongs to the DnaA family. As to quaternary structure, oligomerizes as a right-handed, spiral filament on DNA at oriC.

The protein resides in the cytoplasm. Plays an essential role in the initiation and regulation of chromosomal replication. ATP-DnaA binds to the origin of replication (oriC) to initiate formation of the DNA replication initiation complex once per cell cycle. Binds the DnaA box (a 9 base pair repeat at the origin) and separates the double-stranded (ds)DNA. Forms a right-handed helical filament on oriC DNA; dsDNA binds to the exterior of the filament while single-stranded (ss)DNA is stabiized in the filament's interior. The ATP-DnaA-oriC complex binds and stabilizes one strand of the AT-rich DNA unwinding element (DUE), permitting loading of DNA polymerase. After initiation quickly degrades to an ADP-DnaA complex that is not apt for DNA replication. Binds acidic phospholipids. This chain is Chromosomal replication initiator protein DnaA, found in Borrelia turicatae (strain 91E135).